The primary structure comprises 454 residues: Probable glycine dehydrogenase (decarboxylating) subunit 1 (454 aa).

Belongs to the GcvP family. N-terminal subunit subfamily. The glycine cleavage system is composed of four proteins: P, T, L and H. In this organism, the P 'protein' is a heterodimer of two subunits.

It catalyses the reaction N(6)-[(R)-lipoyl]-L-lysyl-[glycine-cleavage complex H protein] + glycine + H(+) = N(6)-[(R)-S(8)-aminomethyldihydrolipoyl]-L-lysyl-[glycine-cleavage complex H protein] + CO2. The glycine cleavage system catalyzes the degradation of glycine. The P protein binds the alpha-amino group of glycine through its pyridoxal phosphate cofactor; CO(2) is released and the remaining methylamine moiety is then transferred to the lipoamide cofactor of the H protein. The polypeptide is Probable glycine dehydrogenase (decarboxylating) subunit 1 (Sorangium cellulosum (strain So ce56) (Polyangium cellulosum (strain So ce56))).